Reading from the N-terminus, the 62-residue chain is Large ribosomal subunit protein bL33 (62 aa).

Belongs to the bacterial ribosomal protein bL33 family.

This is Large ribosomal subunit protein bL33 from Azobacteroides pseudotrichonymphae genomovar. CFP2.